Here is a 555-residue protein sequence, read N- to C-terminus: Formate--tetrahydrofolate ligase (555 aa).

63 to 70 provides a ligand contact to ATP; it reads TPAGEGKT.

It belongs to the formate--tetrahydrofolate ligase family.

It catalyses the reaction (6S)-5,6,7,8-tetrahydrofolate + formate + ATP = (6R)-10-formyltetrahydrofolate + ADP + phosphate. It participates in one-carbon metabolism; tetrahydrofolate interconversion. The chain is Formate--tetrahydrofolate ligase from Beijerinckia indica subsp. indica (strain ATCC 9039 / DSM 1715 / NCIMB 8712).